Consider the following 484-residue polypeptide: Probable efflux pump outer membrane protein TtgC (484 aa).

Residues 1–17 form the signal peptide; sequence MTKSLLSLAVTAFILGG. Cys-18 carries N-palmitoyl cysteine lipidation. A lipid anchor (S-diacylglycerol cysteine) is attached at Cys-18.

This sequence belongs to the outer membrane factor (OMF) (TC 1.B.17) family.

It localises to the cell outer membrane. Its function is as follows. Probable outer membrane component of the TtgABC efflux pump with unknown specificity. The chain is Probable efflux pump outer membrane protein TtgC (ttgC) from Pseudomonas putida (strain ATCC 47054 / DSM 6125 / CFBP 8728 / NCIMB 11950 / KT2440).